A 148-amino-acid polypeptide reads, in one-letter code: Nucleoside diphosphate kinase (148 aa).

Residues K9, F57, R85, T91, R102, and N112 each coordinate ATP. T91 bears the Phosphothreonine mark. The active-site Pros-phosphohistidine intermediate is H115. S122 carries the phosphoserine modification.

It belongs to the NDK family. As to quaternary structure, homotetramer. The cofactor is Mg(2+).

The protein localises to the cytoplasm. It catalyses the reaction a 2'-deoxyribonucleoside 5'-diphosphate + ATP = a 2'-deoxyribonucleoside 5'-triphosphate + ADP. The catalysed reaction is a ribonucleoside 5'-diphosphate + ATP = a ribonucleoside 5'-triphosphate + ADP. Its function is as follows. Major role in the synthesis of nucleoside triphosphates other than ATP. The ATP gamma phosphate is transferred to the NDP beta phosphate via a ping-pong mechanism, using a phosphorylated active-site intermediate. The polypeptide is Nucleoside diphosphate kinase (Bacillus cereus (strain ATCC 10987 / NRS 248)).